A 120-amino-acid polypeptide reads, in one-letter code: T-cell receptor beta chain V region PHDS203 (120 aa).

An N-terminal signal peptide occupies residues 1 to 11; the sequence is VVLCFLGTGLV. The v segment stretch occupies residues 12–106; the sequence is DMKVTQMSRY…TSVYFCAQGA (95 aa). Cys-34 and Cys-102 are oxidised to a cystine. Residues 107-120 are j segment; the sequence is PEQYFGPGTRLTVL.

The sequence is that of T-cell receptor beta chain V region PHDS203 from Mus musculus (Mouse).